We begin with the raw amino-acid sequence, 198 residues long: MLPSATSLLRGPCLGLRAAALRLVRQQVPHVCAVRLMRCSSHRRGEALTGAPLDNAPKEYPPKIQQLVQDIASLTLLEISDLNELLKKTLKIQDVGLMPMGGMVPGAAPAPTAPEAAEEDVPKQKERTHFTVRLTEAKPVDKVKLIKEIKNYVQGINLVQAKKLVESLPQEIKANVAKAEAEKIKAALEAVGGTVVLE.

Residues 1–36 constitute a mitochondrion transit peptide; that stretch reads MLPSATSLLRGPCLGLRAAALRLVRQQVPHVCAVRL. Low complexity predominate over residues 106–115; sequence GAAPAPTAPE. A disordered region spans residues 106 to 126; the sequence is GAAPAPTAPEAAEEDVPKQKE. Lysine 125, lysine 138, lysine 142, and lysine 144 each carry N6-acetyllysine. Lysine 150 carries the N6-acetyllysine; alternate modification. Lysine 150 carries the N6-succinyllysine; alternate modification. Lysine 150 participates in a covalent cross-link: Glycyl lysine isopeptide (Lys-Gly) (interchain with G-Cter in ubiquitin). Position 162 is an N6-succinyllysine (lysine 162). N6-acetyllysine occurs at positions 163 and 173. Lysine 178 carries the N6-acetyllysine; alternate modification. At lysine 178 the chain carries N6-succinyllysine; alternate. Residue lysine 185 is modified to N6-acetyllysine.

Belongs to the bacterial ribosomal protein bL12 family. Component of the mitochondrial ribosome large subunit (39S) which comprises a 16S rRNA and about 50 distinct proteins. Interacts with NOA1. Two mature forms are produced by differential two-step proteolytic cleavage. Cleaved by the mitochondrial processing protease to produce the long mature form and subsequently by the mitochondrial intermediate protease to produce the short mature form. Post-translationally, in the presence of CUL3, undergoes 'Lys-63'-linked ubiquitination at Lys-150 which results in proteasomal degradation.

It is found in the mitochondrion matrix. As a component of the mitochondrial large ribosomal subunit, plays a role in mitochondrial translation. When present in mitochondria as a free protein not associated with the ribosome, associates with mitochondrial RNA polymerase POLRMT to activate transcription. Required for POLRMT stability. This Bos taurus (Bovine) protein is Large ribosomal subunit protein bL12m (MRPL12).